The primary structure comprises 180 residues: ADP-ribosylation factor 4 (180 aa).

Residue glycine 2 is the site of N-myristoyl glycine attachment. GTP-binding positions include glycine 24 to threonine 31, aspartate 67 to glutamine 71, and asparagine 126 to aspartate 129.

It belongs to the small GTPase superfamily. Arf family.

The protein resides in the golgi apparatus. Functionally, GTP-binding protein involved in protein trafficking; may modulate vesicle budding and uncoating within the Golgi apparatus. May be involved in ciliogenesis. The sequence is that of ADP-ribosylation factor 4 (arf4) from Xenopus laevis (African clawed frog).